The primary structure comprises 554 residues: CTP synthase (554 aa).

Residues 1–265 (MTPLIFVTGG…DEIVVNQLKL (265 aa)) are amidoligase domain. S13 serves as a coordination point for CTP. UTP is bound at residue S13. ATP is bound by residues 14–19 (SLGKGI) and D71. 2 residues coordinate Mg(2+): D71 and E139. Residues 146-148 (DIE), 186-191 (KTKPTQ), and K222 each bind CTP. Residues 186–191 (KTKPTQ) and K222 contribute to the UTP site. Positions 292 to 545 (TIAVVGKYVD…IRAARERKAG (254 aa)) constitute a Glutamine amidotransferase type-1 domain. Residue G353 participates in L-glutamine binding. The active-site Nucleophile; for glutamine hydrolysis is C380. L-glutamine-binding positions include 381–384 (YGMQ), E404, and R471. Catalysis depends on residues H518 and E520.

It belongs to the CTP synthase family. Homotetramer.

It carries out the reaction UTP + L-glutamine + ATP + H2O = CTP + L-glutamate + ADP + phosphate + 2 H(+). The catalysed reaction is L-glutamine + H2O = L-glutamate + NH4(+). The enzyme catalyses UTP + NH4(+) + ATP = CTP + ADP + phosphate + 2 H(+). It functions in the pathway pyrimidine metabolism; CTP biosynthesis via de novo pathway; CTP from UDP: step 2/2. Allosterically activated by GTP, when glutamine is the substrate; GTP has no effect on the reaction when ammonia is the substrate. The allosteric effector GTP functions by stabilizing the protein conformation that binds the tetrahedral intermediate(s) formed during glutamine hydrolysis. Inhibited by the product CTP, via allosteric rather than competitive inhibition. In terms of biological role, catalyzes the ATP-dependent amination of UTP to CTP with either L-glutamine or ammonia as the source of nitrogen. Regulates intracellular CTP levels through interactions with the four ribonucleotide triphosphates. The sequence is that of CTP synthase from Stenotrophomonas maltophilia (strain R551-3).